The sequence spans 273 residues: Bis(5'-nucleosyl)-tetraphosphatase, symmetrical (273 aa).

It belongs to the Ap4A hydrolase family.

It catalyses the reaction P(1),P(4)-bis(5'-adenosyl) tetraphosphate + H2O = 2 ADP + 2 H(+). Functionally, hydrolyzes diadenosine 5',5'''-P1,P4-tetraphosphate to yield ADP. The protein is Bis(5'-nucleosyl)-tetraphosphatase, symmetrical of Histophilus somni (strain 2336) (Haemophilus somnus).